Consider the following 417-residue polypeptide: Voltage-gated potassium channel Kch (417 aa).

Topologically, residues 1 to 21 are cytoplasmic; sequence MSHWATFKQTATNLWVTLRHD. A helical membrane pass occupies residues 22 to 41; that stretch reads ILALAVFLNGLLIFKTIYGM. Topologically, residues 42–63 are periplasmic; it reads SVNLLDIFHIKAFSELDLSLLA. Residues 64–83 form a helical membrane-spanning segment; the sequence is NAPLFMLGVFLVLNSIGLLF. The Cytoplasmic portion of the chain corresponds to 84 to 86; it reads RAK. The chain crosses the membrane as a helical span at residues 87 to 104; that stretch reads LAWAISIILLLIALIYTL. Residues 105 to 110 are Periplasmic-facing; that stretch reads HFYPWL. The helical transmembrane segment at 111–127 threads the bilayer; it reads KFSIGFCIFTLVFLLIL. Residues 128-140 lie on the Cytoplasmic side of the membrane; it reads RKDFSHSSAAAGT. A helical membrane pass occupies residues 141-160; sequence IFAFISFTTLLFYSTYGALY. Residues 161–199 lie on the Periplasmic side of the membrane; that stretch reads LSEGFNPRIESLMTAFYFSIETMSTVGYGDIVPVSESAR. Positions 185-190 match the Selectivity filter motif; it reads TVGYGD. A helical membrane pass occupies residues 200–220; it reads LFTISVIISGITVFATSMTSI. Residues 221–417 lie on the Cytoplasmic side of the membrane; the sequence is FGPLIRGGFN…KADSKESAQK (197 aa). The region spanning 243 to 363 is the RCK N-terminal domain; the sequence is KDHFIVCGHS…IKMVHPDIIL (121 aa).

It belongs to the potassium channel family. In terms of assembly, dimer.

It is found in the cell inner membrane. K(+)-specific ion channel. May play a role in the defense against osmotic shock. This chain is Voltage-gated potassium channel Kch (kch), found in Escherichia coli (strain K12).